Reading from the N-terminus, the 98-residue chain is Serine rich endogenous peptide 10 (98 aa).

Residues 1–29 (MERKKFSSKFIHLLIVFLLLCTFLSRTES) form the signal peptide. The segment at 50 to 98 (NSAIGTPSSTSDHAPGSNGRKLMSIYRPNGDIFTGPSGSGHGGGRTPAP) is disordered. A compositionally biased stretch (polar residues) spans 52-61 (AIGTPSSTSD). Short sequence motifs (SCOOP motif) lie at residues 52–66 (AIGTPSSTSDHAPGS) and 80–94 (DIFTGPSGSGHGGGR). 2 consecutive short sequence motifs (sxS motif essential for MIK2 binding) follow at residues 58–60 (STS) and 86–88 (SGS). The segment covering 86-98 (SGSGHGGGRTPAP) has biased composition (gly residues).

Belongs to the serine rich endogenous peptide (SCOOP) phytocytokine family. Interacts with MIK2 (via extracellular leucine-rich repeat domain); this interaction triggers the formation of complex between MIK2 and the BAK1/SERK3 and SERK4 coreceptors, and subsequent BAK1 activation by phosphorylation. As to expression, mostly expressed in leaves and seedlings shoots, to a lower extent, in roots, but barely in flowers.

Its subcellular location is the cell membrane. It localises to the secreted. The protein localises to the extracellular space. It is found in the apoplast. Its function is as follows. Brassicaceae-specific phytocytokine (plant endogenous peptide released into the apoplast) perceived by MIK2 in a BAK1/SERK3 and SERK4 coreceptors-dependent manner, that modulates various physiological and antimicrobial processes including growth prevention and reactive oxygen species (ROS) response regulation. Inhibits root growth and regulates root meristems. Promotes ROS production and MAPK (e.g. MPK3, MPK4 and MPK6) activation in a MIK2-dependent manner, thus leading to the up-regulation of immune-related marker genes (e.g. WRKY30, WRKY33 and CYP81F2). The polypeptide is Serine rich endogenous peptide 10 (Arabidopsis thaliana (Mouse-ear cress)).